We begin with the raw amino-acid sequence, 444 residues long: Phosphoglucosamine mutase (444 aa).

S102 functions as the Phosphoserine intermediate in the catalytic mechanism. Positions 102, 241, 243, and 245 each coordinate Mg(2+). S102 is modified (phosphoserine).

It belongs to the phosphohexose mutase family. It depends on Mg(2+) as a cofactor. Activated by phosphorylation.

It catalyses the reaction alpha-D-glucosamine 1-phosphate = D-glucosamine 6-phosphate. In terms of biological role, catalyzes the conversion of glucosamine-6-phosphate to glucosamine-1-phosphate. The protein is Phosphoglucosamine mutase of Actinobacillus pleuropneumoniae serotype 5b (strain L20).